The sequence spans 102 residues: Thioredoxin (102 aa).

A Thioredoxin domain is found at 2 to 102 (VTEIRSLKQL…KTKIIDLFNN (101 aa)). Cysteine 30 and cysteine 33 form a disulfide bridge.

This sequence belongs to the thioredoxin family.

Participates in various redox reactions through the reversible oxidation of its active center dithiol to a disulfide and catalyzes dithiol-disulfide exchange reactions. This chain is Thioredoxin (trxA), found in Mycoplasma genitalium (strain ATCC 33530 / DSM 19775 / NCTC 10195 / G37) (Mycoplasmoides genitalium).